Here is a 397-residue protein sequence, read N- to C-terminus: Succinate--CoA ligase [ADP-forming] subunit beta (397 aa).

In terms of domain architecture, ATP-grasp spans 9–254 (KALLKSFGAP…TTEEDEKEIE (246 aa)). ATP contacts are provided by residues Lys46, 53-55 (GRG), Glu109, Ala112, and Glu117. Positions 209 and 223 each coordinate Mg(2+). Residues Asn274 and 331 to 333 (GIM) each bind substrate.

The protein belongs to the succinate/malate CoA ligase beta subunit family. As to quaternary structure, heterotetramer of two alpha and two beta subunits. Mg(2+) is required as a cofactor.

It catalyses the reaction succinate + ATP + CoA = succinyl-CoA + ADP + phosphate. The enzyme catalyses GTP + succinate + CoA = succinyl-CoA + GDP + phosphate. It functions in the pathway carbohydrate metabolism; tricarboxylic acid cycle; succinate from succinyl-CoA (ligase route): step 1/1. Its function is as follows. Succinyl-CoA synthetase functions in the citric acid cycle (TCA), coupling the hydrolysis of succinyl-CoA to the synthesis of either ATP or GTP and thus represents the only step of substrate-level phosphorylation in the TCA. The beta subunit provides nucleotide specificity of the enzyme and binds the substrate succinate, while the binding sites for coenzyme A and phosphate are found in the alpha subunit. The chain is Succinate--CoA ligase [ADP-forming] subunit beta from Mesorhizobium japonicum (strain LMG 29417 / CECT 9101 / MAFF 303099) (Mesorhizobium loti (strain MAFF 303099)).